A 280-amino-acid chain; its full sequence is Pyrethroid hydrolase (280 aa).

Active-site charge relay system residues include aspartate 202 and histidine 230. The interval 254 to 280 (YRQTATKAGPDRPAGADGGRADRADLP) is disordered.

It belongs to the AB hydrolase superfamily. As to quaternary structure, monomer.

The enzyme catalyses (-)-trans-permethrin + H2O = (3-phenoxyphenyl)methanol + (1S,3R)-3-(2,2-dichlorovinyl)-2,2-dimethylcyclopropanecarboxylate + H(+). Functionally, catalyzes the hydrolysis of pyrethroids pesticides. Catalyzes the hydrolysis of cypermethrin to equimolar amounts of cyano-3-phenoxybenzyl alcohol and 2,2-dimethyl-3-(2,2-dichlorovinyl)-cyclopropanecarboxylic acid. Hydrolyzes cis-permethrin at approximately equal rate to trans-permethrin. The polypeptide is Pyrethroid hydrolase (pytH) (Sphingobium wenxiniae (strain DSM 21828 / CGMCC 1.7748 / JZ-1)).